Consider the following 442-residue polypeptide: tRNA modification GTPase MnmE (442 aa).

(6S)-5-formyl-5,6,7,8-tetrahydrofolate-binding residues include R27, E84, and K124. The region spanning 221 to 366 (GLHVVIVGAP…LLDALQAFAE (146 aa)) is the TrmE-type G domain. Residues 231–236 (NAGKSS), 250–256 (SEEAGTT), and 275–278 (DTAG) contribute to the GTP site. 2 residues coordinate Mg(2+): S235 and T256. A (6S)-5-formyl-5,6,7,8-tetrahydrofolate-binding site is contributed by K442.

It belongs to the TRAFAC class TrmE-Era-EngA-EngB-Septin-like GTPase superfamily. TrmE GTPase family. As to quaternary structure, homodimer. Heterotetramer of two MnmE and two MnmG subunits. Requires K(+) as cofactor.

It is found in the cytoplasm. Functionally, exhibits a very high intrinsic GTPase hydrolysis rate. Involved in the addition of a carboxymethylaminomethyl (cmnm) group at the wobble position (U34) of certain tRNAs, forming tRNA-cmnm(5)s(2)U34. The chain is tRNA modification GTPase MnmE from Brucella ovis (strain ATCC 25840 / 63/290 / NCTC 10512).